A 229-amino-acid chain; its full sequence is Putative N-acetylmannosamine-6-phosphate 2-epimerase (229 aa).

This sequence belongs to the NanE family.

The catalysed reaction is an N-acyl-D-glucosamine 6-phosphate = an N-acyl-D-mannosamine 6-phosphate. It participates in amino-sugar metabolism; N-acetylneuraminate degradation; D-fructose 6-phosphate from N-acetylneuraminate: step 3/5. Functionally, converts N-acetylmannosamine-6-phosphate (ManNAc-6-P) to N-acetylglucosamine-6-phosphate (GlcNAc-6-P). This is Putative N-acetylmannosamine-6-phosphate 2-epimerase from Actinobacillus pleuropneumoniae serotype 5b (strain L20).